The sequence spans 377 residues: Succinyl-diaminopimelate desuccinylase (377 aa).

Histidine 66 provides a ligand contact to Zn(2+). Aspartate 68 is an active-site residue. Aspartate 99 provides a ligand contact to Zn(2+). Glutamate 133 serves as the catalytic Proton acceptor. Zn(2+) is bound by residues glutamate 134, glutamate 162, and histidine 348.

Belongs to the peptidase M20A family. DapE subfamily. Homodimer. It depends on Zn(2+) as a cofactor. Requires Co(2+) as cofactor.

The catalysed reaction is N-succinyl-(2S,6S)-2,6-diaminopimelate + H2O = (2S,6S)-2,6-diaminopimelate + succinate. It functions in the pathway amino-acid biosynthesis; L-lysine biosynthesis via DAP pathway; LL-2,6-diaminopimelate from (S)-tetrahydrodipicolinate (succinylase route): step 3/3. Catalyzes the hydrolysis of N-succinyl-L,L-diaminopimelic acid (SDAP), forming succinate and LL-2,6-diaminopimelate (DAP), an intermediate involved in the bacterial biosynthesis of lysine and meso-diaminopimelic acid, an essential component of bacterial cell walls. This chain is Succinyl-diaminopimelate desuccinylase, found in Marinomonas sp. (strain MWYL1).